A 318-amino-acid chain; its full sequence is 2-keto-3-deoxygluconate permease (318 aa).

10 consecutive transmembrane segments (helical) span residues 10 to 30 (IPGG…TFTP), 42 to 62 (GLIT…GASI), 76 to 96 (VLVI…GTFL), 105 to 125 (LLAG…NGGL), 139 to 159 (AGAF…VILG), 162 to 182 (GIAT…LIGF), 199 to 219 (VQTL…LAVI), 224 to 244 (FAGI…LIIA), 263 to 283 (AGAA…FAPV), and 289 to 309 (ALVA…TALW).

It belongs to the KdgT transporter family.

It localises to the cell inner membrane. It catalyses the reaction 2-dehydro-3-deoxy-D-gluconate(in) + H(+)(in) = 2-dehydro-3-deoxy-D-gluconate(out) + H(+)(out). Its function is as follows. Catalyzes the proton-dependent uptake of 2-keto-3-deoxygluconate (KDG) into the cell. This chain is 2-keto-3-deoxygluconate permease, found in Pectobacterium carotovorum subsp. carotovorum (strain PC1).